Here is a 72-residue protein sequence, read N- to C-terminus: Beta-defensin 104 (72 aa).

Residues 1-22 (MQRLVLLLAISLLLYQDLPVRS) form the signal peptide. Cystine bridges form between Cys30–Cys57, Cys37–Cys51, and Cys41–Cys58.

This sequence belongs to the beta-defensin family. High expression in the testis. Gastric antrum exhibited relatively high levels. A lower expression is observed in uterus and neutrophils thyroid gland, lung, and kidney. No detectable expression in other tissues tested.

The protein resides in the secreted. Its function is as follows. Has antimicrobial activity. Synergistic effects with lysozyme and DEFB103. The sequence is that of Beta-defensin 104 (DEFB104A) from Homo sapiens (Human).